The chain runs to 343 residues: Probable dual-specificity RNA methyltransferase RlmN (343 aa).

E83 functions as the Proton acceptor in the catalytic mechanism. The 235-residue stretch at 89–323 folds into the Radical SAM core domain; sequence YLDRKTICVS…VSVRRSRGKD (235 aa). An intrachain disulfide couples C96 to C328. The [4Fe-4S] cluster site is built by C103, C107, and C110. S-adenosyl-L-methionine contacts are provided by residues 153 to 154, S185, 209 to 211, and N285; these read GE and SLH. C328 (S-methylcysteine intermediate) is an active-site residue.

This sequence belongs to the radical SAM superfamily. RlmN family. [4Fe-4S] cluster is required as a cofactor.

Its subcellular location is the cytoplasm. It catalyses the reaction adenosine(2503) in 23S rRNA + 2 reduced [2Fe-2S]-[ferredoxin] + 2 S-adenosyl-L-methionine = 2-methyladenosine(2503) in 23S rRNA + 5'-deoxyadenosine + L-methionine + 2 oxidized [2Fe-2S]-[ferredoxin] + S-adenosyl-L-homocysteine. It carries out the reaction adenosine(37) in tRNA + 2 reduced [2Fe-2S]-[ferredoxin] + 2 S-adenosyl-L-methionine = 2-methyladenosine(37) in tRNA + 5'-deoxyadenosine + L-methionine + 2 oxidized [2Fe-2S]-[ferredoxin] + S-adenosyl-L-homocysteine. Specifically methylates position 2 of adenine 2503 in 23S rRNA and position 2 of adenine 37 in tRNAs. The chain is Probable dual-specificity RNA methyltransferase RlmN from Deinococcus deserti (strain DSM 17065 / CIP 109153 / LMG 22923 / VCD115).